A 447-amino-acid polypeptide reads, in one-letter code: Glutamate--tRNA ligase 1 (447 aa).

The 'HIGH' region motif lies at 10 to 20 (PSPTGMLHVGN). Residues 240 to 244 (KISKR) carry the 'KMSKS' region motif. ATP is bound at residue Lys-243.

The protein belongs to the class-I aminoacyl-tRNA synthetase family. Glutamate--tRNA ligase type 1 subfamily. In terms of assembly, monomer.

The protein localises to the cytoplasm. The catalysed reaction is tRNA(Glu) + L-glutamate + ATP = L-glutamyl-tRNA(Glu) + AMP + diphosphate. Its function is as follows. Catalyzes the attachment of glutamate to tRNA(Glu) in a two-step reaction: glutamate is first activated by ATP to form Glu-AMP and then transferred to the acceptor end of tRNA(Glu). The chain is Glutamate--tRNA ligase 1 from Rickettsia akari (strain Hartford).